The primary structure comprises 172 residues: Interferon tau-3 (172 aa).

Cystine bridges form between cysteine 1-cysteine 99 and cysteine 29-cysteine 139. The N-linked (GlcNAc...) asparagine glycan is linked to asparagine 78.

It belongs to the alpha/beta interferon family. IFN-alphaII subfamily. In terms of tissue distribution, constitutively and exclusively expressed in the mononuclear cells of the extraembryonic trophectoderm.

The protein localises to the secreted. Its function is as follows. Paracrine hormone primarily responsible for maternal recognition of pregnancy. Interacts with endometrial receptors, probably type I interferon receptors, and blocks estrogen receptor expression, preventing the estrogen-induced increase in oxytocin receptor expression in the endometrium. This results in the suppression of the pulsatile endometrial release of the luteolytic hormone prostaglandin F2-alpha, hindering the regression of the corpus luteum (luteolysis) and therefore a return to ovarian cyclicity. This, and a possible direct effect of IFN-tau on prostaglandin synthesis, leads in turn to continued ovarian progesterone secretion, which stimulates the secretion by the endometrium of the nutrients required for the growth of the conceptus. In summary, displays particularly high antiviral and antiproliferative potency concurrently with particular weak cytotoxicity, high antiluteolytic activity and immunomodulatory properties. In contrast with other IFNs, IFN-tau is not virally inducible. This Bos taurus (Bovine) protein is Interferon tau-3 (IFNT3).